The chain runs to 623 residues: (-)-alpha-pinene synthase 1, chloroplastic (623 aa).

A chloroplast-targeting transit peptide spans 1–52 (MDLISVLPSASKSCVCLHKPLSSSTHKLKPFCKTIRILGMPRRWKFAGPSMS). Residues aspartate 374, aspartate 378, and aspartate 526 each coordinate Mg(2+). The DDXXD motif motif lies at 374–378 (DDMYD).

This sequence belongs to the terpene synthase family. Tpsd subfamily. Mg(2+) serves as cofactor. Mn(2+) is required as a cofactor.

Its subcellular location is the plastid. The protein resides in the chloroplast. It carries out the reaction (2E)-geranyl diphosphate = (1S,5S)-alpha-pinene + diphosphate. The catalysed reaction is (2E)-geranyl diphosphate = (1S,5S)-beta-pinene + diphosphate. It catalyses the reaction (2E)-geranyl diphosphate = (-)-beta-phellandrene + diphosphate. It participates in terpene metabolism; oleoresin biosynthesis. The protein operates within secondary metabolite biosynthesis; terpenoid biosynthesis. In terms of biological role, monoterpene synthase (TPS) involved in the biosynthesis of monoterpene natural products included in conifer oleoresin secretions and volatile emissions; these compounds contribute to biotic and abiotic stress defense against herbivores and pathogens. Catalyzes the conversion of (2E)-geranyl diphosphate (GPP) to (-)-alpha-pinene and (-)-beta-pinene, and, to a lower extent, to (-)-beta-phellandrene. This chain is (-)-alpha-pinene synthase 1, chloroplastic, found in Pinus banksiana (Jack pine).